Here is a 105-residue protein sequence, read N- to C-terminus: U1-sicaritoxin-Li1b (105 aa).

An N-terminal signal peptide occupies residues 1–19 (MKLLFEGLLVLVLIAFVVA). The propeptide occupies 20–36 (EFESDAEKWEALITQER). Intrachain disulfides connect Cys38–Cys55, Cys46–Cys60, Cys54–Cys73, and Cys62–Cys71. Arg82 carries the post-translational modification Arginine amide. Residues 86 to 105 (ALMVDPETHRMLSLHRLSEE) constitute a propeptide that is removed on maturation.

This sequence belongs to the neurotoxin 28 (Litx) family. In terms of tissue distribution, expressed by the venom gland.

It is found in the secreted. Functionally, toxin active against insects (S.frugiperda larvae). May act on sodium (Nav) or calcium (Cav) channels. The chain is U1-sicaritoxin-Li1b from Loxosceles intermedia (Brown spider).